Reading from the N-terminus, the 447-residue chain is Tubulin beta-1 chain (447 aa).

Gln11 provides a ligand contact to GTP. Residue Ser40 is modified to Phosphoserine. GTP contacts are provided by Glu69, Ser138, Gly142, Thr143, Gly144, Asn204, and Asn226. Glu69 contributes to the Mg(2+) binding site. Ser339 carries the phosphoserine modification. The segment at 427-447 is disordered; the sequence is EATADEDAEFEEEQEAEVDEN. Residues 429–447 are compositionally biased toward acidic residues; that stretch reads TADEDAEFEEEQEAEVDEN.

This sequence belongs to the tubulin family. In terms of assembly, dimer of alpha and beta chains. A typical microtubule is a hollow water-filled tube with an outer diameter of 25 nm and an inner diameter of 15 nM. Alpha-beta heterodimers associate head-to-tail to form protofilaments running lengthwise along the microtubule wall with the beta-tubulin subunit facing the microtubule plus end conferring a structural polarity. Microtubules usually have 13 protofilaments but different protofilament numbers can be found in some organisms and specialized cells. Interacts with mgr and Vhl. The cofactor is Mg(2+).

The protein resides in the cytoplasm. It localises to the cytoskeleton. Its function is as follows. Tubulin is the major constituent of microtubules, a cylinder consisting of laterally associated linear protofilaments composed of alpha- and beta-tubulin heterodimers. Microtubules grow by the addition of GTP-tubulin dimers to the microtubule end, where a stabilizing cap forms. Below the cap, tubulin dimers are in GDP-bound state, owing to GTPase activity of alpha-tubulin. This Drosophila melanogaster (Fruit fly) protein is Tubulin beta-1 chain (betaTub56D).